We begin with the raw amino-acid sequence, 377 residues long: Alkane 1-monooxygenase 2 (377 aa).

4 consecutive transmembrane segments (helical) span residues 17–37 (GYWI…WSLG), 43–63 (AWPW…DAIV), 87–107 (VLSL…GWIL), and 116–136 (VGQL…GITV). Fe cation-binding residues include histidine 138, histidine 142, histidine 168, histidine 172, and histidine 173. A helical membrane pass occupies residues 236–256 (ALFLLGFSLAFGWLGAIFFLG). The Fe cation site is built by histidine 312, histidine 315, and histidine 316.

It belongs to the fatty acid desaturase type 1 family. AlkB subfamily. The cofactor is Fe(3+).

The protein resides in the cell inner membrane. It catalyses the reaction octane + 2 reduced [rubredoxin] + O2 + 2 H(+) = 2 oxidized [rubredoxin] + octan-1-ol + H2O. The protein operates within hydrocarbon metabolism; alkane degradation. In terms of biological role, catalyzes the hydroxylation of n-alkanes in the presence of a NADH-rubredoxin reductase and rubredoxin. It preferably hydroxylases C12-C20 hydrocarbons. The chain is Alkane 1-monooxygenase 2 (alkB2) from Pseudomonas aeruginosa (strain ATCC 15692 / DSM 22644 / CIP 104116 / JCM 14847 / LMG 12228 / 1C / PRS 101 / PAO1).